The sequence spans 232 residues: Early E1A protein (232 aa).

The tract at residues 40–48 is interaction with RB1 in competition with E2F1; the sequence is PTLHDLFDV. Positions 69–84 are enriched in low complexity; sequence TDSSASTEADSGFSPL. Residues 69–97 are disordered; it reads TDSSASTEADSGFSPLSTPPVSPIPPHPT. Positions 85–97 are enriched in pro residues; that stretch reads STPPVSPIPPHPT. Residues 107 to 111 carry the LXCXE motif, interaction with host RB1 motif; it reads LLCLE. Residues 146-164 fold into a zinc finger; that stretch reads CLRCAFYQEQDDNALCGLC. The segment at 175-232 is disordered; it reads SAGAEEEDDEVIFVSAKPGGRKRSAATPCEPDGVSKRPCVPEPEQTEPLDLSLKPRPN. A PXDLS motif, CTBP-binding motif is present at residues 222-226; the sequence is PLDLS. Positions 228-232 match the Nuclear localization signal motif; the sequence is KPRPN.

The protein belongs to the adenoviridae E1A protein family. As to quaternary structure, interacts with host UBE2I; this interaction interferes with polySUMOylation. Interacts with host RB1; this interaction induces the aberrant dissociation of RB1-E2F1 complex thereby disrupting the activity of RB1 and activating E2F1-regulated genes. Interacts with host ATF7; the interaction enhances ATF7-mediated viral transactivation activity which requires the zinc binding domains of both proteins. Isoform early E1A 32 kDa protein and isoform early E1A 26 kDa protein interact (via N-terminus) with CUL1 and E3 ubiquitin ligase RBX1; these interactions inhibit RBX1-CUL1-dependent elongation reaction of ubiquitin chains and attenuate ubiquitination of SCF(FBXW7) target proteins. Interacts (via PXLXP motif) with host ZMYND11/BS69 (via MYND-type zinc finger); this interaction inhibits E1A mediated transactivation. Interacts with host EP300; this interaction stimulates the acetylation of RB1 by recruiting EP300 and RB1 into a multimeric-protein complex. Interacts with host CTBP1 and CTBP2; this interaction seems to potentiate viral replication. Interacts with host DCAF7. Interacts with host DYRK1A. Interacts with host KPNA4; this interaction allows E1A import into the host nucleus. Interacts with host EP400; this interaction stabilizes MYC. Interacts with host TBP protein; this interaction probably disrupts the TBP-TATA complex.

The protein resides in the host nucleus. Plays a role in viral genome replication by driving entry of quiescent cells into the cell cycle. Stimulation of progression from G1 to S phase allows the virus to efficiently use the cellular DNA replicating machinery to achieve viral genome replication. E1A protein has both transforming and trans-activating activities. Induces the disassembly of the E2F1 transcription factor from RB1 by direct competition for the same binding site on RB1, with subsequent transcriptional activation of E2F1-regulated S-phase genes and of the E2 region of the adenoviral genome. Release of E2F1 leads to the ARF-mediated inhibition of MDM2 and causes TP53/p53 to accumulate because it is not targeted for degradation by MDM2-mediated ubiquitination anymore. This increase in TP53, in turn, would arrest the cell proliferation and direct its death but this effect is counteracted by the viral protein E1B-55K. Inactivation of the ability of RB1 to arrest the cell cycle is critical for cellular transformation, uncontrolled cellular growth and proliferation induced by viral infection. Interaction with RBX1 and CUL1 inhibits ubiquitination of the proteins targeted by SCF(FBXW7) ubiquitin ligase complex, and may be linked to unregulated host cell proliferation. The tumorigenesis-restraining activity of E1A may be related to the disruption of the host CtBP-CtIP complex through the CtBP binding motif. The polypeptide is Early E1A protein (Canine adenovirus serotype 2 (strain Toronto A 26-61) (CAdV-2)).